Here is a 493-residue protein sequence, read N- to C-terminus: Ribulose bisphosphate carboxylase large chain (493 aa).

Asn-132 is a substrate binding site. Cys-181 bears the S-nitrosocysteine mark. Residue Thr-182 participates in substrate binding. Lys-184 (proton acceptor) is an active-site residue. Lys-186 is a substrate binding site. Lys-210, Asp-212, and Glu-213 together coordinate Mg(2+). N6-carboxylysine is present on Lys-210. Catalysis depends on His-302, which acts as the Proton acceptor. Residues Arg-303, His-335, and Ser-387 each contribute to the substrate site. Cys-460 is subject to S-nitrosocysteine.

Belongs to the RuBisCO large chain family. Type I subfamily. Heterohexadecamer of 8 large chains and 8 small chains. Mg(2+) is required as a cofactor.

It localises to the plastid. Its subcellular location is the chloroplast. It carries out the reaction 2 (2R)-3-phosphoglycerate + 2 H(+) = D-ribulose 1,5-bisphosphate + CO2 + H2O. The enzyme catalyses D-ribulose 1,5-bisphosphate + O2 = 2-phosphoglycolate + (2R)-3-phosphoglycerate + 2 H(+). Its function is as follows. RuBisCO catalyzes two reactions: the carboxylation of D-ribulose 1,5-bisphosphate, the primary event in carbon dioxide fixation, as well as the oxidative fragmentation of the pentose substrate in the photorespiration process. Both reactions occur simultaneously and in competition at the same active site. Carbon dioxide and oxygen bind in the same pocket of the enzyme in a similar manner. In Galdieria sulphuraria (Red alga), this protein is Ribulose bisphosphate carboxylase large chain.